We begin with the raw amino-acid sequence, 532 residues long: Probable pectinesterase/pectinesterase inhibitor 39 (532 aa).

The signal sequence occupies residues 1 to 34 (MINNHPIREKPKHIIFNLLSLIFFLIFLSTVVSS). The segment at 35–169 (QSPSYTTHKT…ENLKEIILDI (135 aa)) is pectinesterase inhibitor 39. Residues N62, N74, N85, N172, N221, N231, N244, and N287 are each glycosylated (N-linked (GlcNAc...) asparagine). The pectinesterase 39 stretch occupies residues 221–518 (NLSVAIDGTG…FTVGPFIDGS (298 aa)). Substrate contacts are provided by T296 and Q326. D349 (proton donor; for pectinesterase activity) is an active-site residue. D370 acts as the Nucleophile; for pectinesterase activity in catalysis. N-linked (GlcNAc...) asparagine glycosylation is found at N382 and N404. R438 and W440 together coordinate substrate. Residues N502 and N522 are each glycosylated (N-linked (GlcNAc...) asparagine).

This sequence in the N-terminal section; belongs to the PMEI family. It in the C-terminal section; belongs to the pectinesterase family. As to expression, expressed in siliques but not in flower buds.

It is found in the secreted. Its subcellular location is the cell wall. It catalyses the reaction [(1-&gt;4)-alpha-D-galacturonosyl methyl ester](n) + n H2O = [(1-&gt;4)-alpha-D-galacturonosyl](n) + n methanol + n H(+). Its pathway is glycan metabolism; pectin degradation; 2-dehydro-3-deoxy-D-gluconate from pectin: step 1/5. Acts in the modification of cell walls via demethylesterification of cell wall pectin. In Arabidopsis thaliana (Mouse-ear cress), this protein is Probable pectinesterase/pectinesterase inhibitor 39 (PME39).